A 231-amino-acid polypeptide reads, in one-letter code: Large ribosomal subunit protein uL1 (231 aa).

This sequence belongs to the universal ribosomal protein uL1 family. In terms of assembly, part of the 50S ribosomal subunit.

Binds directly to 23S rRNA. The L1 stalk is quite mobile in the ribosome, and is involved in E site tRNA release. In terms of biological role, protein L1 is also a translational repressor protein, it controls the translation of the L11 operon by binding to its mRNA. In Methylocella silvestris (strain DSM 15510 / CIP 108128 / LMG 27833 / NCIMB 13906 / BL2), this protein is Large ribosomal subunit protein uL1.